The chain runs to 196 residues: ATP-dependent Clp protease proteolytic subunit (196 aa).

S101 functions as the Nucleophile in the catalytic mechanism. Residue H126 is part of the active site.

It belongs to the peptidase S14 family. In terms of assembly, component of the chloroplastic Clp protease core complex.

It is found in the plastid. It localises to the chloroplast stroma. It catalyses the reaction Hydrolysis of proteins to small peptides in the presence of ATP and magnesium. alpha-casein is the usual test substrate. In the absence of ATP, only oligopeptides shorter than five residues are hydrolyzed (such as succinyl-Leu-Tyr-|-NHMec, and Leu-Tyr-Leu-|-Tyr-Trp, in which cleavage of the -Tyr-|-Leu- and -Tyr-|-Trp bonds also occurs).. In terms of biological role, cleaves peptides in various proteins in a process that requires ATP hydrolysis. Has a chymotrypsin-like activity. Plays a major role in the degradation of misfolded proteins. This chain is ATP-dependent Clp protease proteolytic subunit, found in Lactuca sativa (Garden lettuce).